Reading from the N-terminus, the 680-residue chain is Chondroitin proteoglycan 4 (680 aa).

The N-terminal stretch at 1–18 (MLRVNLLILLCFVPFSLN) is a signal peptide. N-linked (GlcNAc...) asparagine glycosylation is found at Asn-42, Asn-59, Asn-72, Asn-167, Asn-205, Asn-458, Asn-472, Asn-486, Asn-498, Asn-526, Asn-527, Asn-556, and Asn-604. The disordered stretch occupies residues 460 to 680 (TKKAETTKKS…PLTTTLHELY (221 aa)). Positions 484 to 500 (AANTTAETTKTTSANIT) are enriched in low complexity. Residues 520-530 (SLDTSGNNSTV) are compositionally biased toward polar residues. Low complexity-rich tracts occupy residues 633 to 647 (GEAS…SGEV) and 654 to 669 (SGYS…SSGE). Ser-640 and Ser-644 each carry an O-linked (Xyl...) (chondroitin sulfate) serine glycan. The N-linked (GlcNAc...) asparagine glycan is linked to Asn-664.

This is Chondroitin proteoglycan 4 (cpg-4) from Caenorhabditis briggsae.